Reading from the N-terminus, the 354-residue chain is Rhodopsin (354 aa).

Residues Met-1–Ala-36 are Extracellular-facing. Residues Asn-2 and Asn-15 are each glycosylated (N-linked (GlcNAc...) asparagine). A helical membrane pass occupies residues Phe-37–Val-61. At Thr-62–Asn-73 the chain is on the cytoplasmic side. A helical membrane pass occupies residues Tyr-74–Tyr-96. Residues Thr-97–Cys-110 lie on the Extracellular side of the membrane. Cysteines 110 and 187 form a disulfide. A helical membrane pass occupies residues Asn-111–Val-133. The 'Ionic lock' involved in activated form stabilization signature appears at Glu-134–Trp-136. Residues Glu-134–His-152 lie on the Cytoplasmic side of the membrane. Residues Ala-153–Phe-173 traverse the membrane as a helical segment. At Gly-174 to Ser-202 the chain is on the extracellular side. The helical transmembrane segment at Phe-203–Gly-224 threads the bilayer. Over Arg-225–Arg-252 the chain is Cytoplasmic. A helical membrane pass occupies residues Met-253–Phe-274. The Extracellular portion of the chain corresponds to Ile-275–Val-286. The helical transmembrane segment at Phe-287–Cys-308 threads the bilayer. An N6-(retinylidene)lysine modification is found at Lys-296. Residues Met-309–Ala-354 are Cytoplasmic-facing. S-palmitoyl cysteine attachment occurs at residues Cys-322 and Cys-323. The interval Gly-333–Ala-354 is disordered. Low complexity predominate over residues Ala-334 to Ala-354.

It belongs to the G-protein coupled receptor 1 family. Opsin subfamily. Phosphorylated on some or all of the serine and threonine residues present in the C-terminal region. In terms of processing, contains one covalently linked retinal chromophore.

It localises to the membrane. The protein localises to the cell projection. It is found in the cilium. Its subcellular location is the photoreceptor outer segment. In terms of biological role, photoreceptor required for image-forming vision at low light intensity. While most salt water fish species use retinal as chromophore, most freshwater fish use 3-dehydroretinal, or a mixture of retinal and 3-dehydroretinal. Light-induced isomerization of 11-cis to all-trans retinal triggers a conformational change that activates signaling via G-proteins. Subsequent receptor phosphorylation mediates displacement of the bound G-protein alpha subunit by arrestin and terminates signaling. This Zeus faber (John Dory) protein is Rhodopsin (rho).